A 770-amino-acid polypeptide reads, in one-letter code: MLPPSGFAGLVPPSHFQARPLPTLPRMAPTWASDVPLVQSPASQDVLERRLDAQRSTVTTWGQDFCGDGQGLGRRGRSLELGFSSALSQQAELISRQLQELRRLEEEVRSLRETSLQQKMRLETQAVELDALAVAEKAGQAEAEGLRTALAGAEMVRKNLEEAKHKELEEIQSLHQEQLSSLTQAHQKALDSLASKAEGLEKSLNSLETKRAGEAKQLAMAQKEADMLRNQLSKTQEELEAQVTLVESLRKYVGEQVLPEFPSQEWELERKELLDTLKHLKEDRADLQATVELLQVRVQSLTHMLALQEEELTRKIQPLDPLEPEFPKKCRSLLRNWREKVFALMVQLKAQDLQHRDSTSQLRIQVAELQEQVTSQSQEQAILQRALQDKTAQVEVERMSTKSLQMELDQAQEARRRQEQQIASAEEQLKFVVGAMNSTQAKLQSTMTRMDQAVARIPSLSNRLSYAVRKVHTIKGLMARKVALAQLRVESSPPSEAAPPLDTDLSVELEQLREERNRLDAELQLSAHLIQQEVGRAREQGEVERRRLIEVAQQLEQELQRAQESLASVGQQLEAARRGQQESTEEAASLRQELTQQQEIYGQALQEKVAEVETRLREQLSDTKRRLNEARREQAKAVVSLRQIQHKATQEKERNQELRRLQDEARKEEGQRLTRRVQELERDKNLMLQRLLAVLPSGVNKKCSPRSVESSSSESPAAASCKESVKGSLTVLLDNLQGLSEAISRDEDICVEDNQNTKKTKNPPSDPLLS.

Coiled-coil stretches lie at residues 56–289 (STVT…DLQA), 334–420 (LRNW…RQEQ), and 476–669 (GLMA…RKEE). Disordered stretches follow at residues 573–592 (LEAARRGQQESTEEAASLRQ), 641–672 (LRQIQHKATQEKERNQELRRLQDEARKEEGQR), 700–721 (NKKCSPRSVESSSSESPAAASC), and 744–770 (SRDEDICVEDNQNTKKTKNPPSDPLLS). Positions 648–672 (ATQEKERNQELRRLQDEARKEEGQR) are enriched in basic and acidic residues. Residues 701–721 (KKCSPRSVESSSSESPAAASC) are compositionally biased toward low complexity.

The protein resides in the cytoplasm. It is found in the nucleus. Its function is as follows. May be a regulator of keratinocyte proliferation or differentiation. The protein is Coiled-coil alpha-helical rod protein 1 (Cchcr1) of Mus musculus (Mouse).